Here is a 176-residue protein sequence, read N- to C-terminus: Probable DNA-directed RNA polymerase subunit delta (176 aa).

Residues 14–81 (KSFIDMAYTL…GENLWGLRDW (68 aa)) form the HTH HARE-type domain. Positions 114 to 176 (LGEDEMDDDD…DFEDEEDFKA (63 aa)) are disordered. Composition is skewed to acidic residues over residues 116-145 (EDEM…QVEE) and 153-176 (VIEE…DFKA).

Belongs to the RpoE family. RNAP is composed of a core of 2 alpha, a beta and a beta' subunits. The core is associated with a delta subunit and one of several sigma factors.

Its function is as follows. Participates in both the initiation and recycling phases of transcription. In the presence of the delta subunit, RNAP displays an increased specificity of transcription, a decreased affinity for nucleic acids, and an increased efficiency of RNA synthesis because of enhanced recycling. This is Probable DNA-directed RNA polymerase subunit delta from Staphylococcus aureus (strain bovine RF122 / ET3-1).